Reading from the N-terminus, the 1417-residue chain is Cytoadherence-linked asexual protein 3.1 (1417 aa).

A signal peptide spans 1–24 (MVSFFKTPIFILIIFLYLNEKVIC). Disulfide bonds link C333–C361, C407–C413, C517–C545, and C521–C542. A helical transmembrane segment spans residues 1204–1224 (LANGFMYAFCFFAISQMYAYF). The disordered stretch occupies residues 1383-1417 (TYIDTEKMNEADSADSDDEKDSDTPDDELMISRFH). The span at 1394-1411 (DSADSDDEKDSDTPDDEL) shows a compositional bias: acidic residues.

Self-associates. Component of the RhopH complex. RhopH complex is at least composed of CLAG3.1/CLAG3.2, RhopH2 and RhopH3 with a 1:1:1 subunit stoichiometry. CLAG3.1/CLAG3.2 mediates subunit association through independent contacts with RhopH2 and RhopH3, which do not directly interact with one another. Interacts with RhopH2. Interacts with RhopH3.

It is found in the host cell membrane. The protein resides in the host cytoplasm. Its subcellular location is the cytoplasmic vesicle. It localises to the secretory vesicle. The protein localises to the rhoptry. Its function is as follows. Participates in the formation of new permeability pathways in Plasmodium-infected erythrocytes enabling the uptake of nutrients from the blood plasma. The polypeptide is Cytoadherence-linked asexual protein 3.1 (Plasmodium falciparum).